The chain runs to 350 residues: Core protein VP7 (350 aa).

Residue N45 is glycosylated (N-linked (GlcNAc...) asparagine; by host).

It belongs to the orbivirus VP7 family. As to quaternary structure, homotrimer.

Its subcellular location is the virion. Functionally, major structural core protein; binds to structural protein VP3. Constitutes the surface of the AHSV core. This chain is Core protein VP7 (Segment-7), found in African horse sickness virus (AHSV).